Here is a 244-residue protein sequence, read N- to C-terminus: rRNA adenine N-6-methyltransferase (244 aa).

The S-adenosyl-L-methionine site is built by Asn-11, Ile-13, Gly-38, Glu-59, Asp-84, and Asn-101.

This sequence belongs to the class I-like SAM-binding methyltransferase superfamily. rRNA adenine N(6)-methyltransferase family.

It carries out the reaction adenosine(2085) in 23S rRNA + 2 S-adenosyl-L-methionine = N(6)-dimethyladenosine(2085) in 23S rRNA + 2 S-adenosyl-L-homocysteine + 2 H(+). This protein produces a dimethylation of the adenine residue at position 2085 in 23S rRNA, resulting in reduced affinity between ribosomes and macrolide-lincosamide-streptogramin B antibiotics. The protein is rRNA adenine N-6-methyltransferase (ermM) of Staphylococcus epidermidis.